Reading from the N-terminus, the 211-residue chain is Dual specificity protein phosphatase 26 (211 aa).

Residues 60–207 form the Tyrosine-protein phosphatase domain; it reads NHADEVWPGL…LLALDRRLRQ (148 aa). Cys152 acts as the Phosphocysteine intermediate in catalysis.

This sequence belongs to the protein-tyrosine phosphatase family. Non-receptor class dual specificity subfamily. Interacts with HSF4.

Its subcellular location is the cytoplasm. It localises to the nucleus. It is found in the golgi apparatus. It carries out the reaction O-phospho-L-tyrosyl-[protein] + H2O = L-tyrosyl-[protein] + phosphate. The catalysed reaction is O-phospho-L-seryl-[protein] + H2O = L-seryl-[protein] + phosphate. The enzyme catalyses O-phospho-L-threonyl-[protein] + H2O = L-threonyl-[protein] + phosphate. Inactivates MAPK1 and MAPK3 which leads to dephosphorylation of heat shock factor protein 4 and a reduction in its DNA-binding activity. The polypeptide is Dual specificity protein phosphatase 26 (Dusp26) (Rattus norvegicus (Rat)).